We begin with the raw amino-acid sequence, 156 residues long: Ribosomal RNA large subunit methyltransferase H (156 aa).

Residues Leu74, Gly105, and 124 to 129 each bind S-adenosyl-L-methionine; that span reads LSKLTL.

This sequence belongs to the RNA methyltransferase RlmH family. Homodimer.

It localises to the cytoplasm. It catalyses the reaction pseudouridine(1915) in 23S rRNA + S-adenosyl-L-methionine = N(3)-methylpseudouridine(1915) in 23S rRNA + S-adenosyl-L-homocysteine + H(+). Its function is as follows. Specifically methylates the pseudouridine at position 1915 (m3Psi1915) in 23S rRNA. In Legionella pneumophila (strain Lens), this protein is Ribosomal RNA large subunit methyltransferase H.